We begin with the raw amino-acid sequence, 143 residues long: Flagellar assembly factor FliW (143 aa).

Belongs to the FliW family. In terms of assembly, interacts with translational regulator CsrA and flagellin(s).

The protein resides in the cytoplasm. In terms of biological role, acts as an anti-CsrA protein, binds CsrA and prevents it from repressing translation of its target genes, one of which is flagellin. Binds to flagellin and participates in the assembly of the flagellum. The chain is Flagellar assembly factor FliW from Clostridium novyi (strain NT).